We begin with the raw amino-acid sequence, 690 residues long: Iron-regulated transcriptional activator AFT1 (690 aa).

The disordered stretch occupies residues 1 to 21; the sequence is MEGFNPADIEHASPINSSDSH. Residue D110 coordinates Zn(2+). DNA-binding residues include K111, K115, I131, E132, R133, S134, D135, and K138. C143 contributes to the Zn(2+) binding site. The segment covering 148 to 159 has biased composition (basic residues); sequence RGRNARRKRKDK. The interval 148–205 is disordered; it reads RGRNARRKRKDKPKGQDHEDEKSKINDDELEYASPSNATVTNGPQTSPDQTSSIKPKK. Over residues 160 to 174 the composition is skewed to basic and acidic residues; sequence PKGQDHEDEKSKIND. A compositionally biased stretch (polar residues) spans 181–201; it reads SPSNATVTNGPQTSPDQTSSI. C215 contacts Zn(2+). K226 is a binding site for DNA. The Zn(2+) site is built by H239 and H241. N263 provides a ligand contact to DNA. A CDC [2Fe-2S] cluster binding motif motif is present at residues 291–293; it reads CDC. 2 disordered regions span residues 335–357 and 612–655; these read PCLP…PKSQ and SSNE…VQKD. Residues 339 to 351 show a composition bias toward polar residues; it reads SVNNTGSINTNNV. Low complexity predominate over residues 621-638; it reads HQYGPQQQPPQQLQYHQN. Basic and acidic residues predominate over residues 639–649; sequence QPHDGHNHEQH.

In terms of assembly, homodimer. Dimerization decreases the DNA-binding activity.

The protein resides in the nucleus. With respect to regulation, dimerization via the binding of Fe(2+) or a [2Fe-2S] cluster decreases the DNA-binding activity. Its function is as follows. Transcription factor that activates the genes for FRE1, FRE2 and FET3 in response to iron deprivationand thereby plays a central role in iron homeostasis. Also required for the expression of LSO1. Recognizes the consensus iron-responsive element (Fe-RE) sequence 5'-CACCC-3' in the promoters of target genes. Iron could interact directly with AFT1 and inhibits its activity. In high iron condition, the presence of Fe(2+) or [2Fe-2S] cluster leads to dimerization, which in turn leads to a decrease in DNA affinity. This is Iron-regulated transcriptional activator AFT1 from Saccharomyces cerevisiae (strain ATCC 204508 / S288c) (Baker's yeast).